Reading from the N-terminus, the 163-residue chain is Probable protein tyrosine phosphatase type IVA B (163 aa).

Positions 10–161 (TIIESSTHKF…YKASKKAGCK (152 aa)) constitute a Tyrosine-protein phosphatase domain. Cysteine 49 and cysteine 104 are joined by a disulfide. The active-site Proton donor is the aspartate 70. The Phosphocysteine intermediate role is filled by cysteine 104. 105–110 (IAGLGR) contacts phosphate. Arginine 110 is a binding site for substrate. A Cysteine methyl ester modification is found at cysteine 160. Cysteine 160 carries S-farnesyl cysteine lipidation. Residues 161-163 (KIM) constitute a propeptide, removed in mature form.

Belongs to the protein-tyrosine phosphatase family.

It localises to the membrane. The enzyme catalyses O-phospho-L-tyrosyl-[protein] + H2O = L-tyrosyl-[protein] + phosphate. This Dictyostelium discoideum (Social amoeba) protein is Probable protein tyrosine phosphatase type IVA B.